We begin with the raw amino-acid sequence, 250 residues long: Ubiquinone/menaquinone biosynthesis C-methyltransferase UbiE (250 aa).

Residues T73, D94, 122 to 123 (NS), and S139 each bind S-adenosyl-L-methionine.

Belongs to the class I-like SAM-binding methyltransferase superfamily. MenG/UbiE family.

The catalysed reaction is a 2-demethylmenaquinol + S-adenosyl-L-methionine = a menaquinol + S-adenosyl-L-homocysteine + H(+). It carries out the reaction a 2-methoxy-6-(all-trans-polyprenyl)benzene-1,4-diol + S-adenosyl-L-methionine = a 5-methoxy-2-methyl-3-(all-trans-polyprenyl)benzene-1,4-diol + S-adenosyl-L-homocysteine + H(+). The protein operates within quinol/quinone metabolism; menaquinone biosynthesis; menaquinol from 1,4-dihydroxy-2-naphthoate: step 2/2. It functions in the pathway cofactor biosynthesis; ubiquinone biosynthesis. Methyltransferase required for the conversion of demethylmenaquinol (DMKH2) to menaquinol (MKH2) and the conversion of 2-polyprenyl-6-methoxy-1,4-benzoquinol (DDMQH2) to 2-polyprenyl-3-methyl-6-methoxy-1,4-benzoquinol (DMQH2). This Wigglesworthia glossinidia brevipalpis protein is Ubiquinone/menaquinone biosynthesis C-methyltransferase UbiE.